The sequence spans 339 residues: DNA-directed RNA polymerase subunit alpha (339 aa).

The interval 1-235 (MVIQKNWQEL…DQLQVFVNFE (235 aa)) is alpha N-terminal domain (alpha-NTD). The interval 251–339 (FNPALLKKVD…DLAKRFEEHY (89 aa)) is alpha C-terminal domain (alpha-CTD).

Belongs to the RNA polymerase alpha chain family. In terms of assembly, homodimer. The RNAP catalytic core consists of 2 alpha, 1 beta, 1 beta' and 1 omega subunit. When a sigma factor is associated with the core the holoenzyme is formed, which can initiate transcription.

It catalyses the reaction RNA(n) + a ribonucleoside 5'-triphosphate = RNA(n+1) + diphosphate. Functionally, DNA-dependent RNA polymerase catalyzes the transcription of DNA into RNA using the four ribonucleoside triphosphates as substrates. The chain is DNA-directed RNA polymerase subunit alpha from Methylobacterium radiotolerans (strain ATCC 27329 / DSM 1819 / JCM 2831 / NBRC 15690 / NCIMB 10815 / 0-1).